Consider the following 218-residue polypeptide: Small ribosomal subunit protein uS3c (218 aa).

In terms of domain architecture, KH type-2 spans 47 to 118 (VQKNIRISSG…KLNIAITRIS (72 aa)).

This sequence belongs to the universal ribosomal protein uS3 family. Part of the 30S ribosomal subunit.

The protein localises to the plastid. Its subcellular location is the chloroplast. The polypeptide is Small ribosomal subunit protein uS3c (rps3) (Nasturtium officinale (Watercress)).